Consider the following 1239-residue polypeptide: MVEPGQDLLLAALSESGISPNDLFDIDSPDVVLATPTPAVQQSVPLSALDLGLETEAPAAVKQEPETVSTPALLNVRQPPSTTTFVLNQINQLPTLGTTIVMTKTTPVTTTRQTITVAKIIQTSTTTRPSVAAPAVRNALTTAPSKDQIQLKDLLKNNSLNELMKLKPPPNIAQPVATAATDLSNGAVKKEASTKEVARIWINDVKMRSFSPTMKVPAVKEEEEPEEEDEEEMGHAETYAEYMPIKLKIGLRHPDPVVETSSLSSVTPPDVWYQTSISEETIDNGWLSALQLEAITYAAQQHETFLPNGDRAGFLIGDGAGVGKGRTIAGIIYENYLLGRKRAVWFSVSNDLKYDAERDLRDIGAKNILVHSLNKFKYGKISSKHNGSVKKGVIFATYSSLIGESQSGGKYKTRLKQLLHWCGEDFDGVIVFDECHKAKNLCPVGSSKPTKTGLAVLELQNKLPKARVVYASATGASEPRNMAYMNRLGIWGEGTPFREFSDFIQAVERRGVGAMEIVAMDMKLRGMYIARQLSFSGVTFKIDEVLLSQEYVKMYNKSVKLWVSARERFQQAADLIDAEQRMKKSMWGQFWSAHQRFFKYLCIASKVKRVVQLAREEIKNGKCVVIGLQSTGEARTLEALEEGGGELNDFVSTAKGVFQSLIEKHFPAPDRKKLFSLLGIDLTAQSNNNSPRDSPCKENKIKKRKGEEVSREAKKARKTGGLAGSSSDESESESDASDNEESDNESSRFLSSGDDDDFNPFRDESSEDDEDDPWLIRKEHKKVKEKKKKKSIDPDSIQSALLASGLGSKRPSCFTSTVGTTTSSTNASANSNTNSSFVTSQDAVERAQQMKKELLDKLEKLAEDLPPNTLDELIDELGGPENVAEMTGRKGRVVSNDDGSISYESRSELDVPVEILNITEKQRFMDGDKNIAIISEAASSGISLQADRRAKNQRRRVHMTLELPWSADRAIQQFGRTHRSNQVTAPEYVFLISELAGEQRFASIVAKRLESLGALTHGDRRATETRDLSRFNFDNKYGRNALEIVMKSIVNLDSPMVSPPPDFPGDFFKDVRQGLIGVGLINVEDRSGILTLDKDYNNIGKFLNRILGMEVHQQNALFQYFSDTLNAVIQNAKKNGRYDMGILDLGSGDEKVRKADVKKFLTPGYSTSGHVELYTISVERGMSWDEATKIWAEQTGPDDGFYLSLQIRNNKKTAILVKEVNPKKKLFWYTDQILGNNSN.

Residues 684-837 are disordered; sequence AQSNNNSPRD…SANSNTNSSF (154 aa). Over residues 694–713 the composition is skewed to basic and acidic residues; that stretch reads SPCKENKIKKRKGEEVSREA. Over residues 728 to 744 the composition is skewed to acidic residues; the sequence is DESESESDASDNEESDN. Residues 778 to 790 show a composition bias toward basic residues; the sequence is KEHKKVKEKKKKK. The segment covering 814-837 has biased composition (low complexity); sequence FTSTVGTTTSSTNASANSNTNSSF. The stretch at 838–866 forms a coiled coil; that stretch reads VTSQDAVERAQQMKKELLDKLEKLAEDLP.

It belongs to the SBNO family.

It localises to the nucleus. In terms of biological role, plays a crucial role in the regulation of neural stem cells (NSCs) proliferation. Enhances the phosphorylation of GSK3B through the PI3K-Akt signaling pathway, thereby upregulating the Wnt/beta-catenin signaling pathway and promoting the proliferation of NSCs. In Gallus gallus (Chicken), this protein is Protein strawberry notch homolog 1 (SBNO1).